Consider the following 375-residue polypeptide: Chaperone protein DnaJ (375 aa).

One can recognise a J domain in the interval 5–70; sequence DYYDVLGVNR…QKRGAYDQFG (66 aa). The CR-type zinc finger occupies 135 to 213; it reads GCEKQIRIPS…CHGAGQKKTT (79 aa). The Zn(2+) site is built by cysteine 148, cysteine 151, cysteine 165, cysteine 168, cysteine 187, cysteine 190, cysteine 201, and cysteine 204. 4 CXXCXGXG motif repeats span residues 148–155, 165–172, 187–194, and 201–208; these read CSTCNGTG, CATCGGHG, CPTCHGTG, and CGSCHGAG.

Belongs to the DnaJ family. Homodimer. Zn(2+) is required as a cofactor.

Its subcellular location is the cytoplasm. Functionally, participates actively in the response to hyperosmotic and heat shock by preventing the aggregation of stress-denatured proteins and by disaggregating proteins, also in an autonomous, DnaK-independent fashion. Unfolded proteins bind initially to DnaJ; upon interaction with the DnaJ-bound protein, DnaK hydrolyzes its bound ATP, resulting in the formation of a stable complex. GrpE releases ADP from DnaK; ATP binding to DnaK triggers the release of the substrate protein, thus completing the reaction cycle. Several rounds of ATP-dependent interactions between DnaJ, DnaK and GrpE are required for fully efficient folding. Also involved, together with DnaK and GrpE, in the DNA replication of plasmids through activation of initiation proteins. This Chromobacterium violaceum (strain ATCC 12472 / DSM 30191 / JCM 1249 / CCUG 213 / NBRC 12614 / NCIMB 9131 / NCTC 9757 / MK) protein is Chaperone protein DnaJ.